Consider the following 433-residue polypeptide: 3-phosphoshikimate 1-carboxyvinyltransferase (433 aa).

Residues K15, S16, and R20 each coordinate 3-phosphoshikimate. Residue K15 coordinates phosphoenolpyruvate. Residues G96 and R124 each contribute to the phosphoenolpyruvate site. The 3-phosphoshikimate site is built by S169, Q171, S195, D318, and K345. Q171 contributes to the phosphoenolpyruvate binding site. Catalysis depends on D318, which acts as the Proton acceptor. The phosphoenolpyruvate site is built by R349 and R393.

The protein belongs to the EPSP synthase family. Monomer.

Its subcellular location is the cytoplasm. It catalyses the reaction 3-phosphoshikimate + phosphoenolpyruvate = 5-O-(1-carboxyvinyl)-3-phosphoshikimate + phosphate. Its pathway is metabolic intermediate biosynthesis; chorismate biosynthesis; chorismate from D-erythrose 4-phosphate and phosphoenolpyruvate: step 6/7. Catalyzes the transfer of the enolpyruvyl moiety of phosphoenolpyruvate (PEP) to the 5-hydroxyl of shikimate-3-phosphate (S3P) to produce enolpyruvyl shikimate-3-phosphate and inorganic phosphate. The polypeptide is 3-phosphoshikimate 1-carboxyvinyltransferase (Chlorobium luteolum (strain DSM 273 / BCRC 81028 / 2530) (Pelodictyon luteolum)).